The following is a 389-amino-acid chain: NAD-dependent protein deacetylase sirtuin-2 (389 aa).

The segment at 1–34 is disordered; that stretch reads MAEPDPSHPLETQAGKVQEAQDSDSDSEGGAAGG. Ala-2 is modified (N-acetylalanine). Phosphoserine is present on residues Ser-23, Ser-25, Ser-27, and Ser-53. In terms of domain architecture, Deacetylase sirtuin-type spans 57 to 338; it reads RLLDELTLEG…LALAELLGWK (282 aa). NAD(+) contacts are provided by residues 85-89 and 95-97; these read AGIST and DFR. Ser-100 carries the phosphoserine modification. 167–170 serves as a coordination point for NAD(+); that stretch reads QNID. His-187 serves as the catalytic Proton acceptor. Zn(2+)-binding residues include Cys-195 and Cys-200. Position 207 is a phosphoserine (Ser-207). Positions 221 and 224 each coordinate Zn(2+). Residues 262–263, 286–288, and Cys-324 each bind NAD(+); these read TS and NKE. The tract at residues 350–389 is disordered; sequence ASIDAQSGAEAPNPSTSASPRKSPPPAQDEARTTEREKPQ. Phosphoserine is present on residues Ser-368 and Ser-372. Basic and acidic residues predominate over residues 378-389; sequence DEARTTEREKPQ.

Belongs to the sirtuin family. Class I subfamily. Interacts with CDC20, FOXO3 and FZR1. Associates with microtubules in primary cortical mature neurons. Homotrimer. Interacts (via both phosphorylated, unphosphorylated, active or inactive forms) with HDAC6; the interaction is necessary for the complex to interact with alpha-tubulin, suggesting that these proteins belong to a large complex that deacetylates the cytoskeleton. Interacts with FOXO1; the interaction is disrupted upon serum-starvation or oxidative stress, leading to increased level of acetylated FOXO1 and induction of autophagy. Interacts with RELA; the interaction occurs in the cytoplasm and is increased in a TNF-alpha-dependent manner. Interacts with HOXA10; the interaction is direct. Interacts with YWHAB and YWHAG; the interactions occur in a AKT-dependent manner and increase SIRT2-dependent TP53 deacetylation. Interacts with MAPK1/ERK2 and MAPK3/ERK1; the interactions increase SIRT2 stability and deacetylation activity. Interacts (phosphorylated form) with KMT5A isoform 2; the interaction is direct, stimulates KMT5A-mediated methyltransferase activity on histone at 'Lys-20' (H4K20me1) and is increased in a H(2)O(2)-induced oxidative stress-dependent manner. Interacts with G6PD; the interaction is enhanced by H(2)O(2) treatment. Interacts with a G1/S-specific cyclin E-CDK2 complex. Interacts with AURKA, CDK5R1 (p35 form) and CDK5 and HIF1A. Interacts with the tRNA ligase SARS1; recruited to the VEGFA promoter via interaction with SARS1. Interacts with BEX4; negatively regulates alpha-tubulin deacetylation by SIRT2. Requires Zn(2+) as cofactor. Post-translationally, phosphorylated at phosphoserine and phosphothreonine. Phosphorylated at Ser-368 by a mitotic kinase CDK1/cyclin B at the G2/M transition; phosphorylation regulates the delay in cell-cycle progression. Phosphorylated at Ser-368 by a mitotic kinase G1/S-specific cyclin E/Cdk2 complex; phosphorylation inactivates SIRT2-mediated alpha-tubulin deacetylation and thereby negatively regulates cell adhesion, cell migration and neurite outgrowth during neuronal differentiation. Phosphorylated by cyclin A/Cdk2 and p35-Cdk5 complexes and to a lesser extent by the cyclin D3/Cdk4 and cyclin B/Cdk1, in vitro. Dephosphorylated at Ser-368 by CDC14A and CDC14B around early anaphase. In terms of processing, acetylated by EP300; acetylation leads both to the decreased of SIRT2-mediated alpha-tubulin deacetylase activity and SIRT2-mediated down-regulation of TP53 transcriptional activity. Ubiquitinated.

The protein resides in the nucleus. It is found in the cytoplasm. Its subcellular location is the perinuclear region. The protein localises to the cytoskeleton. It localises to the microtubule organizing center. The protein resides in the centrosome. It is found in the centriole. Its subcellular location is the spindle. The protein localises to the midbody. It localises to the chromosome. The protein resides in the perikaryon. It is found in the cell projection. Its subcellular location is the growth cone. The protein localises to the myelin membrane. It catalyses the reaction N(6)-acetyl-L-lysyl-[protein] + NAD(+) + H2O = 2''-O-acetyl-ADP-D-ribose + nicotinamide + L-lysyl-[protein]. It carries out the reaction N(6)-tetradecanoyl-L-lysyl-[protein] + NAD(+) + H2O = 2''-O-tetradecanoyl-ADP-D-ribose + nicotinamide + L-lysyl-[protein]. The enzyme catalyses N(6)-hexadecanoyl-L-lysyl-[protein] + NAD(+) + H2O = 2''-O-hexadecanoyl-ADP-D-ribose + nicotinamide + L-lysyl-[protein]. With respect to regulation, inhibited by Sirtinol, A3 and M15 small molecules. Inhibited by nicotinamide. NAD-dependent protein deacetylase, which deacetylates internal lysines on histone and alpha-tubulin as well as many other proteins such as key transcription factors. Participates in the modulation of multiple and diverse biological processes such as cell cycle control, genomic integrity, microtubule dynamics, cell differentiation, metabolic networks, and autophagy. Plays a major role in the control of cell cycle progression and genomic stability. Functions in the antephase checkpoint preventing precocious mitotic entry in response to microtubule stress agents, and hence allowing proper inheritance of chromosomes. Positively regulates the anaphase promoting complex/cyclosome (APC/C) ubiquitin ligase complex activity by deacetylating CDC20 and FZR1, then allowing progression through mitosis. Associates both with chromatin at transcriptional start sites (TSSs) and enhancers of active genes. Plays a role in cell cycle and chromatin compaction through epigenetic modulation of the regulation of histone H4 'Lys-20' methylation (H4K20me1) during early mitosis. Specifically deacetylates histone H4 at 'Lys-16' (H4K16ac) between the G2/M transition and metaphase enabling H4K20me1 deposition by KMT5A leading to ulterior levels of H4K20me2 and H4K20me3 deposition throughout cell cycle, and mitotic S-phase progression. Deacetylates KMT5A modulating KMT5A chromatin localization during the mitotic stress response. Also deacetylates histone H3 at 'Lys-57' (H3K56ac) during the mitotic G2/M transition. During oocyte meiosis progression, may deacetylate histone H4 at 'Lys-16' (H4K16ac) and alpha-tubulin, regulating spindle assembly and chromosome alignment by influencing microtubule dynamics and kinetochore function. Deacetylates histone H4 at 'Lys-16' (H4K16ac) at the VEGFA promoter and thereby contributes to regulate expression of VEGFA, a key regulator of angiogenesis. Deacetylates alpha-tubulin at 'Lys-40' and hence controls neuronal motility, oligodendroglial cell arbor projection processes and proliferation of non-neuronal cells. Phosphorylation at Ser-368 by a G1/S-specific cyclin E-CDK2 complex inactivates SIRT2-mediated alpha-tubulin deacetylation, negatively regulating cell adhesion, cell migration and neurite outgrowth during neuronal differentiation. Deacetylates PARD3 and participates in the regulation of Schwann cell peripheral myelination formation during early postnatal development and during postinjury remyelination. Involved in several cellular metabolic pathways. Plays a role in the regulation of blood glucose homeostasis by deacetylating and stabilizing phosphoenolpyruvate carboxykinase PCK1 activity in response to low nutrient availability. Acts as a key regulator in the pentose phosphate pathway (PPP) by deacetylating and activating the glucose-6-phosphate G6PD enzyme, and therefore, stimulates the production of cytosolic NADPH to counteract oxidative damage. Maintains energy homeostasis in response to nutrient deprivation as well as energy expenditure by inhibiting adipogenesis and promoting lipolysis. Attenuates adipocyte differentiation by deacetylating and promoting FOXO1 interaction to PPARG and subsequent repression of PPARG-dependent transcriptional activity. Plays a role in the regulation of lysosome-mediated degradation of protein aggregates by autophagy in neuronal cells. Deacetylates FOXO1 in response to oxidative stress or serum deprivation, thereby negatively regulating FOXO1-mediated autophagy. Deacetylates a broad range of transcription factors and co-regulators regulating target gene expression. Deacetylates transcriptional factor FOXO3 stimulating the ubiquitin ligase SCF(SKP2)-mediated FOXO3 ubiquitination and degradation. Deacetylates HIF1A and therefore promotes HIF1A degradation and inhibition of HIF1A transcriptional activity in tumor cells in response to hypoxia. Deacetylates RELA in the cytoplasm inhibiting NF-kappaB-dependent transcription activation upon TNF-alpha stimulation. Inhibits transcriptional activation by deacetylating p53/TP53 and EP300. Also deacetylates EIF5A. Functions as a negative regulator on oxidative stress-tolerance in response to anoxia-reoxygenation conditions. Plays a role as tumor suppressor. In addition to protein deacetylase activity, also has activity toward long-chain fatty acyl groups and mediates protein-lysine demyristoylation and depalmitoylation of target proteins, such as ARF6 and KRAS, thereby regulating their association with membranes. The protein is NAD-dependent protein deacetylase sirtuin-2 (SIRT2) of Macaca fascicularis (Crab-eating macaque).